The primary structure comprises 143 residues: NADH-quinone oxidoreductase subunit A (143 aa).

Transmembrane regions (helical) follow at residues 12–32 (YIVGSVFLCVFMLLCGYFLGG), 61–81 (FYLIAMIFVIFDVEGIYLYIW), and 90–110 (WIGFIEVCIFVFILLISLIYA).

Belongs to the complex I subunit 3 family. NDH-1 is composed of 13 different subunits. Subunits NuoA, H, J, K, L, M, N constitute the membrane sector of the complex.

It is found in the cell inner membrane. The catalysed reaction is a quinone + NADH + 5 H(+)(in) = a quinol + NAD(+) + 4 H(+)(out). Functionally, NDH-1 shuttles electrons from NADH, via FMN and iron-sulfur (Fe-S) centers, to quinones in the respiratory chain. The immediate electron acceptor for the enzyme in this species is believed to be ubiquinone. Couples the redox reaction to proton translocation (for every two electrons transferred, four hydrogen ions are translocated across the cytoplasmic membrane), and thus conserves the redox energy in a proton gradient. This chain is NADH-quinone oxidoreductase subunit A, found in Blochmanniella floridana.